Reading from the N-terminus, the 189-residue chain is Interferon alpha-H (189 aa).

The signal sequence occupies residues 1 to 23 (MAPAWSFLLALLLLSCNAICSLG). Disulfide bonds link C24–C122 and C52–C162.

It belongs to the alpha/beta interferon family.

The protein resides in the secreted. Its function is as follows. Produced by macrophages, IFN-alpha have antiviral activities. Interferon stimulates the production of two enzymes: a protein kinase and an oligoadenylate synthetase. This Bos taurus (Bovine) protein is Interferon alpha-H (IFNAH).